The sequence spans 85 residues: Large ribosomal subunit protein bL27 (85 aa).

Residues methionine 1–glycine 22 form a disordered region. Residues alanine 7–glutamine 19 are compositionally biased toward polar residues.

The protein belongs to the bacterial ribosomal protein bL27 family.

This is Large ribosomal subunit protein bL27 (rpmA) from Streptomyces griseus.